The primary structure comprises 199 residues: UPF0637 protein YsbB (199 aa).

The protein belongs to the UPF0637 family.

The polypeptide is UPF0637 protein YsbB (ysbB) (Lactococcus lactis subsp. lactis (strain IL1403) (Streptococcus lactis)).